An 873-amino-acid polypeptide reads, in one-letter code: DNA helicase/primase complex-associated protein (873 aa).

The segment at 394–422 (PPLPRDDGDGENNVVEVSSSTGGAHPPSD) is disordered.

This sequence belongs to the herpesviridae HEPA family. As to quaternary structure, associates with the primase and the helicase to form the helicase-primase complex. Interacts with the origin-binding protein. Interacts with the polymerase catalytic subunit.

The protein resides in the host nucleus. Functionally, component of the helicase/primase complex. Unwinds the DNA at the replication forks and generates single-stranded DNA for both leading and lagging strand synthesis. The primase synthesizes short RNA primers on the lagging strand that the polymerase presumably elongates using dNTPs. The primase-associated factor has no known catalytic activity in the complex and may serve to facilitate the formation of the replisome by directly interacting with the origin-binding protein and the polymerase. The sequence is that of DNA helicase/primase complex-associated protein (UL102) from Human cytomegalovirus (strain Merlin) (HHV-5).